The sequence spans 62 residues: Venom peptide SjAPI-2 (62 aa).

Cystine bridges form between C4–C40, C14–C36, C18–C32, C22–C60, and C42–C54. The TIL domain maps to 4-60 (CRISGEVFTWCGTTCPLTCENFRNPPKHCPQGCFVGCMCRRGLVRHRNGRCVRPPRC).

It belongs to the serine protease inhibitor-like (TIL domain-containing) family. In terms of tissue distribution, expressed by the venom gland.

The protein resides in the secreted. Functionally, serine protease inhibitor. This Scorpiops jendeki (Scorpion) protein is Venom peptide SjAPI-2.